The primary structure comprises 121 residues: UPF0102 protein BHWA1_02005 (121 aa).

The protein belongs to the UPF0102 family.

This Brachyspira hyodysenteriae (strain ATCC 49526 / WA1) protein is UPF0102 protein BHWA1_02005.